A 212-amino-acid chain; its full sequence is Adenylate kinase (212 aa).

Position 14–19 (14–19) interacts with ATP; it reads GSGKGT. The interval 34–63 is NMP; the sequence is STGDLFRKKISEDSRFAAQIQNYLSSGSYV. Residues Thr35, Arg40, 61-63, 89-92, and Gln96 each bind AMP; these read SYV and GYPR. The LID stretch occupies residues 126–163; the sequence is QRLFCQKCQKSYNLLLAKPKNGLKCDLDNTDLITRNDD. Arg127 contacts ATP. The Zn(2+) site is built by Cys130 and Cys133. 136–137 contacts ATP; the sequence is SY. Zn(2+) contacts are provided by Cys150 and Asp153. Residues Arg160 and Arg171 each contribute to the AMP site. ATP is bound at residue Gln199.

This sequence belongs to the adenylate kinase family. In terms of assembly, monomer.

The protein resides in the cytoplasm. It catalyses the reaction AMP + ATP = 2 ADP. Its pathway is purine metabolism; AMP biosynthesis via salvage pathway; AMP from ADP: step 1/1. Its function is as follows. Catalyzes the reversible transfer of the terminal phosphate group between ATP and AMP. Plays an important role in cellular energy homeostasis and in adenine nucleotide metabolism. The protein is Adenylate kinase of Mesomycoplasma hyopneumoniae (strain 232) (Mycoplasma hyopneumoniae).